Reading from the N-terminus, the 745-residue chain is Multiple C2 domain and transmembrane region protein 13 (745 aa).

Residues 1 to 30 are disordered; that stretch reads MAANKDEFSVKQISPKLGGERGARNPYGPT. 3 consecutive C2 domains span residues 21 to 139, 171 to 293, and 326 to 453; these read RGAR…PQRY, DASE…SAPA, and AEES…ACSY. The Ca(2+) site is built by Asp-56, Asp-61, Asp-106, and Asn-110. 2 consecutive transmembrane segments (helical) span residues 568–588 and 688–708; these read SLIVWLAIYLVVVPCIVLVGL and FYCWLICVLVALCWYNIPMWL.

Belongs to the MCTP family. It depends on Ca(2+) as a cofactor. In terms of tissue distribution, expressed in incipient leaf primordia.

The protein localises to the cell membrane. The protein resides in the cytoplasm. In terms of biological role, may function as a signaling molecule by regulating the trafficking of other regulators. The protein is Multiple C2 domain and transmembrane region protein 13 of Arabidopsis thaliana (Mouse-ear cress).